A 428-amino-acid chain; its full sequence is Tyrosine--tRNA ligase (428 aa).

Tyr34 provides a ligand contact to L-tyrosine. The 'HIGH' region signature appears at 39-48; it reads PTADSLHIGH. 2 residues coordinate L-tyrosine: Tyr171 and Gln175. A 'KMSKS' region motif is present at residues 236 to 240; the sequence is KFGKT. Lys239 provides a ligand contact to ATP. In terms of domain architecture, S4 RNA-binding spans 358–424; sequence VGLIDLLVDA…GKKKYFLIQV (67 aa).

Belongs to the class-I aminoacyl-tRNA synthetase family. TyrS type 1 subfamily. As to quaternary structure, homodimer.

It is found in the cytoplasm. It carries out the reaction tRNA(Tyr) + L-tyrosine + ATP = L-tyrosyl-tRNA(Tyr) + AMP + diphosphate + H(+). Catalyzes the attachment of tyrosine to tRNA(Tyr) in a two-step reaction: tyrosine is first activated by ATP to form Tyr-AMP and then transferred to the acceptor end of tRNA(Tyr). This is Tyrosine--tRNA ligase from Oceanobacillus iheyensis (strain DSM 14371 / CIP 107618 / JCM 11309 / KCTC 3954 / HTE831).